We begin with the raw amino-acid sequence, 308 residues long: Putative acetyl-hydrolase LipR (308 aa).

The N-terminal stretch at 1 to 40 (MNLRKNVIRSVLRGARPLFASRRLGIAGRRVLLATLTAGA) is a signal peptide. The Involved in the stabilization of the negatively charged intermediate by the formation of the oxyanion hole motif lies at 76–78 (HGG). Active-site residues include serine 146, aspartate 239, and histidine 269.

This sequence belongs to the 'GDXG' lipolytic enzyme family.

Its function is as follows. Required for maintaining the appropriate mycolic acid composition and permeability of the envelope on its exposure to acidic pH. This is Putative acetyl-hydrolase LipR (lipR) from Mycobacterium tuberculosis (strain ATCC 25618 / H37Rv).